The chain runs to 89 residues: Small ribosomal subunit protein uS15 (89 aa).

It belongs to the universal ribosomal protein uS15 family. In terms of assembly, part of the 30S ribosomal subunit. Forms a bridge to the 50S subunit in the 70S ribosome, contacting the 23S rRNA.

In terms of biological role, one of the primary rRNA binding proteins, it binds directly to 16S rRNA where it helps nucleate assembly of the platform of the 30S subunit by binding and bridging several RNA helices of the 16S rRNA. Its function is as follows. Forms an intersubunit bridge (bridge B4) with the 23S rRNA of the 50S subunit in the ribosome. In Ralstonia nicotianae (strain ATCC BAA-1114 / GMI1000) (Ralstonia solanacearum), this protein is Small ribosomal subunit protein uS15.